A 408-amino-acid polypeptide reads, in one-letter code: Phosphopentomutase (408 aa).

Mn(2+) contacts are provided by aspartate 10, aspartate 307, histidine 312, aspartate 348, histidine 349, and histidine 360.

Belongs to the phosphopentomutase family. Mn(2+) serves as cofactor.

The protein localises to the cytoplasm. It catalyses the reaction 2-deoxy-alpha-D-ribose 1-phosphate = 2-deoxy-D-ribose 5-phosphate. It carries out the reaction alpha-D-ribose 1-phosphate = D-ribose 5-phosphate. The protein operates within carbohydrate degradation; 2-deoxy-D-ribose 1-phosphate degradation; D-glyceraldehyde 3-phosphate and acetaldehyde from 2-deoxy-alpha-D-ribose 1-phosphate: step 1/2. Its function is as follows. Isomerase that catalyzes the conversion of deoxy-ribose 1-phosphate (dRib-1-P) and ribose 1-phosphate (Rib-1-P) to deoxy-ribose 5-phosphate (dRib-5-P) and ribose 5-phosphate (Rib-5-P), respectively. The chain is Phosphopentomutase from Proteus mirabilis (strain HI4320).